A 156-amino-acid chain; its full sequence is H/ACA ribonucleoprotein complex subunit 2-like protein (156 aa).

The protein belongs to the eukaryotic ribosomal protein eL8 family. Component of the small nucleolar ribonucleoprotein particle containing H/ACA-type snoRNAs (H/ACA snoRNPs).

The protein resides in the nucleus. It is found in the nucleolus. Its function is as follows. Required for ribosome biogenesis. Part of a complex which catalyzes pseudouridylation of rRNA. This involves the isomerization of uridine such that the ribose is subsequently attached to C5, instead of the normal N1. Pseudouridine ('psi') residues may serve to stabilize the conformation of rRNAs. In Arabidopsis thaliana (Mouse-ear cress), this protein is H/ACA ribonucleoprotein complex subunit 2-like protein.